The sequence spans 248 residues: tRNA (guanine-N(1)-)-methyltransferase (248 aa).

Residues Gly113 and 133-138 (LGDFVL) each bind S-adenosyl-L-methionine.

It belongs to the RNA methyltransferase TrmD family. Homodimer.

The protein resides in the cytoplasm. It carries out the reaction guanosine(37) in tRNA + S-adenosyl-L-methionine = N(1)-methylguanosine(37) in tRNA + S-adenosyl-L-homocysteine + H(+). Its function is as follows. Specifically methylates guanosine-37 in various tRNAs. This is tRNA (guanine-N(1)-)-methyltransferase from Albidiferax ferrireducens (strain ATCC BAA-621 / DSM 15236 / T118) (Rhodoferax ferrireducens).